The sequence spans 496 residues: Isocitrate dehydrogenase [NADP] (496 aa).

2 residues coordinate NADP(+): Leu88 and Thr90. Positions 98, 100, 104, 114, and 137 each coordinate D-threo-isocitrate. Positions 193, 229, and 232 each coordinate NADP(+). Asp248 is a Mg(2+) binding site. NADP(+) contacts are provided by Glu277, Gly281, Ser282, Ala283, Lys285, Tyr286, and Asn293.

Belongs to the isocitrate and isopropylmalate dehydrogenases family. As to quaternary structure, homodimer. Mg(2+) serves as cofactor. The cofactor is Mn(2+).

It carries out the reaction D-threo-isocitrate + NADP(+) = 2-oxoglutarate + CO2 + NADPH. In terms of biological role, catalyzes the oxidative decarboxylation of isocitrate to 2-oxoglutarate and carbon dioxide with the concomitant reduction of NADP(+). This Thermus thermophilus (strain ATCC 27634 / DSM 579 / HB8) protein is Isocitrate dehydrogenase [NADP] (icd).